Consider the following 401-residue polypeptide: Multidrug resistance protein MdtH (401 aa).

11 helical membrane-spanning segments follow: residues 13 to 33 (YFLL…FPLI), 34 to 54 (SIRF…ALGL), 99 to 116 (PWIL…GTLF), 139 to 159 (LLMM…SWLL), 165 to 185 (FVCW…VWLL), 214 to 234 (VLTL…LPIV), 243 to 263 (AAVK…LYPI), 277 to 297 (LMFG…ITHL), 299 to 319 (TLFM…PARE), 340 to 360 (LGLA…YDTG), and 368 to 388 (LPWF…YWQF).

The protein belongs to the major facilitator superfamily. DHA1 family. MdtH (TC 2.A.1.2.21) subfamily.

The protein localises to the cell inner membrane. The polypeptide is Multidrug resistance protein MdtH (Yersinia enterocolitica serotype O:8 / biotype 1B (strain NCTC 13174 / 8081)).